A 561-amino-acid polypeptide reads, in one-letter code: Liver carboxylesterase 1F (561 aa).

The N-terminal stretch at Met-1 to Gly-18 is a signal peptide. N-linked (GlcNAc...) asparagine glycosylation is present at Asn-79. The cysteines at positions 87 and 116 are disulfide-linked. Ser-221 functions as the Acyl-ester intermediate in the catalytic mechanism. Cys-273 and Cys-284 are oxidised to a cystine. Catalysis depends on charge relay system residues Glu-353 and His-466. Residues His-558 to Leu-561 carry the Prevents secretion from ER motif.

This sequence belongs to the type-B carboxylesterase/lipase family. Expressed in liver and kidney.

The protein resides in the lipid droplet. It is found in the cytoplasm. It localises to the cytosol. Its subcellular location is the endoplasmic reticulum. The protein localises to the microsome. The enzyme catalyses a carboxylic ester + H2O = an alcohol + a carboxylate + H(+). The catalysed reaction is all-trans-retinyl hexadecanoate + H2O = all-trans-retinol + hexadecanoate + H(+). Involved in the detoxification of xenobiotics and in the activation of ester and amide prodrugs. Hydrolyzes retinyl esters. Hydrolyzes p-nitrophenyl butyrate (PNPB), triacylglycerol and monoacylglycerol. Shows higher activity against PNPB, a short-chain fatty acid ester, than against triolein, a long-chain fatty acid ester. Shows no detectable activity against diacylglycerol, cholesterol ester or phospholipids. May play a role in adipocyte lipolysis. The polypeptide is Liver carboxylesterase 1F (Rattus norvegicus (Rat)).